Here is a 221-residue protein sequence, read N- to C-terminus: Protein myomaker (221 aa).

The Extracellular segment spans residues 1–3; sequence MGT. A helical membrane pass occupies residues 4–24; that stretch reads VVAKLLLPTLSSLAFLPTVSI. At 25 to 29 the chain is on the cytoplasmic side; the sequence is ATKRR. The chain crosses the membrane as a helical span at residues 30–50; the sequence is FYMEAMVYLFTMFFVAFSHAC. Topologically, residues 51 to 64 are extracellular; that stretch reads DGPGLSVLCFMRRD. A helical transmembrane segment spans residues 65 to 85; the sequence is ILEYFSIYGTALSMWVSLMAL. At 86–93 the chain is on the cytoplasmic side; sequence ADFDEPQR. Residues 94–110 form a helical membrane-spanning segment; that stretch reads STFTMLGVLTIAVRTFH. Over 111-113 the chain is Extracellular; that stretch reads DRW. The chain crosses the membrane as a helical span at residues 114–134; sequence GYGVYSGPIGTATLIIAVKWL. Residues 135–153 are Cytoplasmic-facing; sequence KKMKEKKGLYPDKSIYTQQ. Residues 154 to 174 traverse the membrane as a helical segment; that stretch reads IGPGLCFGALALMLRFFFEEW. A topological domain (extracellular) is located at residue Asp-175. A helical transmembrane segment spans residues 176–196; sequence YTYVHSFYHCALAMSFVLLLP. The Cytoplasmic segment spans residues 197 to 221; it reads KVNKKAGNAGAPAKLTFSTLCCTCV. Residues Cys-217 and Cys-218 are each lipidated (S-palmitoyl cysteine).

The protein belongs to the TMEM8 family. As to quaternary structure, interacts with MYMX. Palmitoylated at the C-terminus; palmitoylation promotes localization to the Golgi apparatus. Specifically expressed in skeletal muscle during embryogenesis and adult muscle regeneration.

The protein resides in the cell membrane. It localises to the golgi apparatus membrane. Its function is as follows. Myoblast-specific protein that mediates myoblast fusion, an essential step for the formation of multi-nucleated muscle fibers. Actively participates in the membrane fusion reaction by mediating the mixing of cell membrane lipids (hemifusion) upstream of MYMX. Acts independently of MYMX. Involved in skeletal muscle regeneration in response to injury by mediating the fusion of satellite cells, a population of muscle stem cells, with injured myofibers. Also involved in skeletal muscle hypertrophy, probably by mediating the fusion of satellite cells with myofibers. This Mus musculus (Mouse) protein is Protein myomaker.